We begin with the raw amino-acid sequence, 1649 residues long: Cortactin-binding protein 2 (1649 aa).

The interval 1-27 is disordered; that stretch reads MATDSASCEPDLSRAPGDAEGATAEAA. Positions 15 to 25 are enriched in low complexity; the sequence is APGDAEGATAE. A coiled-coil region spans residues 118 to 275; the sequence is RKMQERMSAQ…EQMKKGNDGK (158 aa). Disordered stretches follow at residues 322-439, 451-476, and 492-604; these read PLSV…PGLN, GNAN…PTSR, and ALSR…LPPK. Positions 330–342 are enriched in polar residues; sequence STGSPLVSTNTKG. The span at 395–416 shows a compositional bias: low complexity; it reads STPSTPSGTAPAAAQTLGAAPQ. Positions 492-503 are enriched in polar residues; it reads ALSRFTSPQAGA. An Asymmetric dimethylarginine modification is found at arginine 495. ANK repeat units follow at residues 699 to 729, 733 to 762, 766 to 795, 799 to 828, 832 to 861, and 901 to 931; these read GRPT…DINY, DSHS…RVDA, NGFT…NINH, GGQT…DRSI, DGWT…PAPG, and EGWT…EPER. The interval 1438–1471 is disordered; that stretch reads SAAWRKVNTSPRKKPGHFSSPMWNKPDLKHEGMR. Serine 1510 is modified (phosphoserine). The disordered stretch occupies residues 1527 to 1649; the sequence is KSESDISKIA…KHEHVEKRNK (123 aa). Residues 1528–1546 show a composition bias toward basic and acidic residues; sequence SESDISKIADSREDLRTFD. Polar residues-rich tracts occupy residues 1547-1557, 1571-1584, and 1621-1630; these read SSRTNPVTSAP, PLSS…SNSK, and NTRQLEINNN. The segment covering 1631–1649 has biased composition (basic and acidic residues); that stretch reads SKEENWNVDKHEHVEKRNK.

In terms of assembly, interacts with CTTN/cortactin SH3 domain. Interacts with STRN, STRN4/zinedin and MOB4/phocein; this interactions mediate the association with the STRIPAK core complex and may regulate dendritic spine distribution of the STRIPAK complex in hippocampal neurons. Activation of glutamate receptors weakens the interaction with STRN and STRN4.

It is found in the cytoplasm. The protein localises to the cell cortex. It localises to the cell projection. The protein resides in the dendritic spine. Its function is as follows. Regulates the dendritic spine distribution of CTTN/cortactin in hippocampal neurons, and thus controls dendritic spinogenesis and dendritic spine maintenance. Associates with the striatin-interacting phosphatase and kinase (STRIPAK) core complex to regulate dendritic spine distribution of the STRIPAK complex in hippocampal neurons. The sequence is that of Cortactin-binding protein 2 (Cttnbp2) from Rattus norvegicus (Rat).